The following is a 275-amino-acid chain: NH(3)-dependent NAD(+) synthetase (275 aa).

43 to 50 is an ATP binding site; that stretch reads GISGGVDS. Mg(2+) is bound at residue aspartate 49. Residue arginine 145 coordinates deamido-NAD(+). Threonine 165 serves as a coordination point for ATP. Glutamate 170 is a Mg(2+) binding site. 2 residues coordinate deamido-NAD(+): lysine 178 and aspartate 185. Positions 194 and 216 each coordinate ATP. A deamido-NAD(+)-binding site is contributed by 265–266; it reads HK.

This sequence belongs to the NAD synthetase family. In terms of assembly, homodimer.

It catalyses the reaction deamido-NAD(+) + NH4(+) + ATP = AMP + diphosphate + NAD(+) + H(+). It functions in the pathway cofactor biosynthesis; NAD(+) biosynthesis; NAD(+) from deamido-NAD(+) (ammonia route): step 1/1. Functionally, catalyzes the ATP-dependent amidation of deamido-NAD to form NAD. Uses ammonia as a nitrogen source. The polypeptide is NH(3)-dependent NAD(+) synthetase (Shewanella denitrificans (strain OS217 / ATCC BAA-1090 / DSM 15013)).